The sequence spans 173 residues: Shikimate kinase (173 aa).

16 to 21 (GSGKTT) contributes to the ATP binding site. Residue Thr-20 participates in Mg(2+) binding. Substrate-binding residues include Asp-38, Arg-62, and Gly-83. Arg-120 is an ATP binding site. Arg-139 serves as a coordination point for substrate. Residue Arg-156 participates in ATP binding.

It belongs to the shikimate kinase family. As to quaternary structure, monomer. Mg(2+) serves as cofactor.

The protein resides in the cytoplasm. The catalysed reaction is shikimate + ATP = 3-phosphoshikimate + ADP + H(+). It functions in the pathway metabolic intermediate biosynthesis; chorismate biosynthesis; chorismate from D-erythrose 4-phosphate and phosphoenolpyruvate: step 5/7. In terms of biological role, catalyzes the specific phosphorylation of the 3-hydroxyl group of shikimic acid using ATP as a cosubstrate. The polypeptide is Shikimate kinase (Corynebacterium diphtheriae (strain ATCC 700971 / NCTC 13129 / Biotype gravis)).